Consider the following 146-residue polypeptide: Myoglobin (146 aa).

One can recognise a Globin domain in the interval 2–140 (ADLDAVLKCW…VIADLEANYK (139 aa)). Histidine 59 serves as a coordination point for nitrite. Histidine 59 is an O2 binding site. Position 88 (histidine 88) interacts with heme b.

The protein belongs to the globin family. In terms of assembly, monomeric.

Its subcellular location is the cytoplasm. The protein resides in the sarcoplasm. It catalyses the reaction Fe(III)-heme b-[protein] + nitric oxide + H2O = Fe(II)-heme b-[protein] + nitrite + 2 H(+). It carries out the reaction H2O2 + AH2 = A + 2 H2O. In terms of biological role, monomeric heme protein which primary function is to store oxygen and facilitate its diffusion within muscle tissues. Reversibly binds oxygen through a pentacoordinated heme iron and enables its timely and efficient release as needed during periods of heightened demand. Depending on the oxidative conditions of tissues and cells, and in addition to its ability to bind oxygen, it also has a nitrite reductase activity whereby it regulates the production of bioactive nitric oxide. Under stress conditions, like hypoxia and anoxia, it also protects cells against reactive oxygen species thanks to its pseudoperoxidase activity. The sequence is that of Myoglobin (mb) from Katsuwonus pelamis (Skipjack tuna).